Reading from the N-terminus, the 330-residue chain is Phosphate acyltransferase (330 aa).

This sequence belongs to the PlsX family. As to quaternary structure, homodimer. Probably interacts with PlsY.

The protein resides in the cytoplasm. It carries out the reaction a fatty acyl-[ACP] + phosphate = an acyl phosphate + holo-[ACP]. It participates in lipid metabolism; phospholipid metabolism. Its function is as follows. Catalyzes the reversible formation of acyl-phosphate (acyl-PO(4)) from acyl-[acyl-carrier-protein] (acyl-ACP). This enzyme utilizes acyl-ACP as fatty acyl donor, but not acyl-CoA. The chain is Phosphate acyltransferase from Lactobacillus delbrueckii subsp. bulgaricus (strain ATCC BAA-365 / Lb-18).